A 441-amino-acid chain; its full sequence is Amino-acid acetyltransferase (441 aa).

Positions 295–434 (EQIRRANIND…QALYNYQRRS (140 aa)) constitute an N-acetyltransferase domain.

Belongs to the acetyltransferase family. ArgA subfamily. Homohexamer.

It is found in the cytoplasm. It carries out the reaction L-glutamate + acetyl-CoA = N-acetyl-L-glutamate + CoA + H(+). The protein operates within amino-acid biosynthesis; L-arginine biosynthesis; N(2)-acetyl-L-ornithine from L-glutamate: step 1/4. In Edwardsiella ictaluri (strain 93-146), this protein is Amino-acid acetyltransferase.